Here is a 245-residue protein sequence, read N- to C-terminus: High affinity immunoglobulin epsilon receptor subunit alpha (245 aa).

A signal peptide spans Met1–Thr23. Residues Ala24–Gln204 lie on the Extracellular side of the membrane. Ig-like domains are found at residues Ser28–Tyr103 and Leu113–Val181. Cysteines 49 and 91 form a disulfide. N-linked (GlcNAc...) asparagine glycosylation is found at Asn52, Asn53, Asn58, Asn65, Asn123, Asn158, and Asn167. Cys130 and Cys174 form a disulfide bridge. The chain crosses the membrane as a helical span at residues Leu205–Phe223. The Cytoplasmic portion of the chain corresponds to Ser224–Gly245.

In terms of assembly, tetramer of an alpha chain, a beta chain, and two disulfide linked gamma chains. Interacts with IGHE (via CH3 region). In terms of tissue distribution, expressed in leukocytes and pinealocytes at night (at protein level).

Its subcellular location is the cell membrane. The protein resides in the secreted. High-affinity receptor for immunoglobulin epsilon/IgE. Mediates IgE effector functions in myeloid cells. Upon IgE binding and antigen/allergen cross-linking initiates signaling pathways that lead to myeloid cell activation and differentiation. On mast cells, basophils and eosinophils stimulates the secretion of vasoactive amines, lipid mediators and cytokines that contribute to inflammatory response, tissue remodeling and cytotoxicity against microbes. Triggers the immediate hypersensitivity response to allergens as a host defense mechanism against helminth parasites, pathogenic bacteria and venom toxicity. When dysregulated, it can elicit harmful life-threatening allergic and anaphylactic reactions. The polypeptide is High affinity immunoglobulin epsilon receptor subunit alpha (Fcer1a) (Rattus norvegicus (Rat)).